Consider the following 393-residue polypeptide: MAEVMDLGKDPNGPTHSSTLFVREDGSAMSFYVRPSSAKRRLSTLILHGGGILCRVQKPGAVLLAQPGEALAEASGDFISTQYILDCVERNEKLELEAYRLGLTEQASDPKPGASAEGSTEPEPQPLTGRIAYTDADDVAILTYVKENARSPSSVTGNALWKAMEKSSLTQHSWQSLKDRYLKHLQGQEHKYLLGNAPVSPSSQKLKRKAEQDPEAADSGEPQNKRTPDLPEEECVKGETKENGEADNKLFEEATPELGEAVVDESPDFEIHITMCDGDPPTPEEDSETQPDEEEEEPKVSTQEVGTAIKIIRQLMEKFNLDLSTVTQALLKNSGELEATSSFLESGRRPDGFPIWCRQDDLDLQKDDDDTRNALVKKYGAQNVARRIEFRKK.

At alanine 2 the chain carries N-acetylalanine. One can recognise a BRCT domain in the interval 10 to 101 (DPNGPTHSST…EKLELEAYRL (92 aa)). A phosphoserine mark is found at serine 36 and serine 43. The interval 104 to 132 (TEQASDPKPGASAEGSTEPEPQPLTGRIA) is disordered. Lysine 111 is covalently cross-linked (Glycyl lysine isopeptide (Lys-Gly) (interchain with G-Cter in SUMO2)). The region spanning 125 to 185 (QPLTGRIAYT…SLKDRYLKHL (61 aa)) is the Myb-like domain. Residues serine 151 and serine 153 each carry the phosphoserine modification. A Glycyl lysine isopeptide (Lys-Gly) (interchain with G-Cter in SUMO2) cross-link involves residue lysine 191. 2 disordered regions span residues 194–248 (LGNA…EADN) and 272–305 (HITMCDGDPPTPEEDSETQPDEEEEEPKVSTQEV). Phosphoserine is present on residues serine 200 and serine 203. Residues lysine 205, lysine 209, and lysine 237 each participate in a glycyl lysine isopeptide (Lys-Gly) (interchain with G-Cter in SUMO2) cross-link. The segment covering 223 to 248 (QNKRTPDLPEEECVKGETKENGEADN) has biased composition (basic and acidic residues). Acidic residues predominate over residues 282-297 (TPEEDSETQPDEEEEE). Residue lysine 366 forms a Glycyl lysine isopeptide (Lys-Gly) (interchain with G-Cter in SUMO2) linkage. Positions 377–393 (KKYGAQNVARRIEFRKK) match the Nuclear localization signal motif.

Belongs to the RAP1 family. In terms of assembly, associates with the I-kappa-B-kinase (IKK) core complex, composed of CHUK, IKBKB and IKBKG. Homodimer. Component of the shelterin complex (telosome) composed of TERF1, TERF2, TINF2, TERF2IP ACD and POT1. Interacts with TERF2 (but not TERF1) with its C-terminus. Interacts with SLX4/BTBD12. Interacts with TERF2; the interaction is direct.

The protein resides in the nucleus. It localises to the cytoplasm. It is found in the chromosome. Its subcellular location is the telomere. In terms of biological role, acts both as a regulator of telomere function and as a transcription regulator. Involved in the regulation of telomere length and protection as a component of the shelterin complex (telosome). In contrast to other components of the shelterin complex, it is dispensible for telomere capping and does not participate in the protection of telomeres against non-homologous end-joining (NHEJ)-mediated repair. Instead, it is required to negatively regulate telomere recombination and is essential for repressing homology-directed repair (HDR), which can affect telomere length. Does not bind DNA directly: recruited to telomeric double-stranded 5'-TTAGGG-3' repeats via its interaction with TERF2. Independently of its function in telomeres, also acts as a transcription regulator: recruited to extratelomeric 5'-TTAGGG-3' sites via its association with TERF2 or other factors, and regulates gene expression. When cytoplasmic, associates with the I-kappa-B-kinase (IKK) complex and acts as a regulator of the NF-kappa-B signaling by promoting IKK-mediated phosphorylation of RELA/p65, leading to activate expression of NF-kappa-B target genes. This chain is Telomeric repeat-binding factor 2-interacting protein 1 (Terf2ip), found in Rattus norvegicus (Rat).